A 2381-amino-acid chain; its full sequence is Highly reducing polyketide synthase virA (2381 aa).

The Ketosynthase family 3 (KS3) domain occupies 1-420; sequence MDALHLACHL…GANGHVILES (420 aa). Residues Cys171, His306, and His344 each act as for beta-ketoacyl synthase activity in the active site. Residues 535 to 851 are malonyl-CoA:ACP transacylase (MAT) domain; that stretch reads VFTGQGAQYA…PYSPTLVRKE (317 aa). Ser629 (for malonyltransferase activity) is an active-site residue. The segment at 920 to 1064 is N-terminal hotdog fold; that stretch reads HELLGTRATA…GSIRVMESTL (145 aa). The interval 920–1232 is dehydratase (DH) domain; sequence HELLGTRATA…HLRMNEYTGK (313 aa). One can recognise a PKS/mFAS DH domain in the interval 920–1235; it reads HELLGTRATA…MNEYTGKAPV (316 aa). The Proton acceptor; for dehydratase activity role is filled by His952. Positions 1078–1235 are C-terminal hotdog fold; it reads HEVWGMSRWY…MNEYTGKAPV (158 aa). Residue Asp1144 is the Proton donor; for dehydratase activity of the active site. The segment at 1639-1956 is enoyl reductase (ER) domain; that stretch reads GMTDTIHFQQ…NKDRVGKVVV (318 aa). The ketoreductase (KR) domain stretch occupies residues 1981–2159; that stretch reads TYLLVGCLGG…AVSVGLGMIS (179 aa). In terms of domain architecture, Carrier spans 2297 to 2375; it reads TMLDAILRLT…TLAEFIEEKL (79 aa). Ser2334 is modified (O-(pantetheine 4'-phosphoryl)serine).

The protein operates within secondary metabolite biosynthesis. Its function is as follows. Highly reducing polyketide synthase; part of the gene cluster that mediates the biosynthesis of virensols and trichoxide, fungal natural products that contain or are derived from a salicylaldehyde core. The pathway begins with the synthesis of the reduced chain in virensol C by the highly reducing polyketide synthase virA via condensation of one acetate and 8 malonate units. VirA has interesting programming rules since the first 2 ketides are fully reduced, the 3 following ketides undergo beta-dehydration, and the last 3 ketides are only reduced to beta-hydroxys to yield the trihydroxy portion. The production of aldehyde virensol C by virA alone is surprising, since virA does not contain a reductase (R) domain that is typically associated with reductive product release in HRPKS. The cupin-domain enzyme virC is involved in enhancing virA product turnover. The short-chain dehydrogenase virB then oxidizes the C-7 alcohol of virensol C to a ketone, yielding virensol D. Virensol D is further transformed to salicylaldehyde 5-deoxyaurocitrin by the short-chain dehydrogenase virD. VirD catalyzes the dehydrogenation of C-3 to form the beta-ketone aldehyde, which is followed by the generation of the nucleophilic C-2 that is required for the intramolecular aldol condensation between C-2 and C-7, itself followed by dehydration and aromatization which leads to salicylaldehyde 5-deoxyaurocitrin. While the dehydrogenation of virensol D is definitely catalyzed by virD, the aldol condensation and dehydration may be uncatalyzed or assisted by virD. The short chain dehydrogenase virG then converts salicylaldehyde 5-deoxyaurocitrin into virensol B which is further hydroxylated by the cytochrome P450 monooxygenase virE to yield the hydroquinone virensol A. VirI then may oxidize virensol A to form the quinone, while virH performs the epoxidation. Finally, the two remaining short-chain dehydrogenases, virK and virL, are probably responsible for reducing the ketones to the corresponding alcohols to furnish the epoxycyclohexanol structure in trichoxide. In Hypocrea virens (strain Gv29-8 / FGSC 10586) (Gliocladium virens), this protein is Highly reducing polyketide synthase virA.